Reading from the N-terminus, the 146-residue chain is Hemoglobin subunit beta (146 aa).

Residue valine 1 is modified to N-acetylvaline. Positions 2–146 (ELTAEEKAAV…VANALAHKYH (145 aa)) constitute a Globin domain. Position 44 is a phosphoserine (serine 44). Lysine 59 carries the post-translational modification N6-acetyllysine. Histidine 63 is a heme b binding site. Lysine 82 carries the post-translational modification N6-acetyllysine. Histidine 92 lines the heme b pocket. Residue cysteine 93 is modified to S-nitrosocysteine. Lysine 144 carries the N6-acetyllysine modification.

This sequence belongs to the globin family. In terms of assembly, heterotetramer of two alpha chains and two beta chains. As to expression, red blood cells.

Involved in oxygen transport from the lung to the various peripheral tissues. The protein is Hemoglobin subunit beta (HBB) of Ceratotherium simum (White rhinoceros).